Consider the following 494-residue polypeptide: Guanosine-5'-triphosphate,3'-diphosphate pyrophosphatase (494 aa).

The protein belongs to the GppA/Ppx family. GppA subfamily.

The catalysed reaction is guanosine 3'-diphosphate 5'-triphosphate + H2O = guanosine 3',5'-bis(diphosphate) + phosphate + H(+). Its pathway is purine metabolism; ppGpp biosynthesis; ppGpp from GTP: step 2/2. In terms of biological role, catalyzes the conversion of pppGpp to ppGpp. Guanosine pentaphosphate (pppGpp) is a cytoplasmic signaling molecule which together with ppGpp controls the 'stringent response', an adaptive process that allows bacteria to respond to amino acid starvation, resulting in the coordinated regulation of numerous cellular activities. The protein is Guanosine-5'-triphosphate,3'-diphosphate pyrophosphatase of Escherichia coli O139:H28 (strain E24377A / ETEC).